The sequence spans 758 residues: Dolichyl-phosphooligosaccharide-protein glycotransferase 2 (758 aa).

The Cytoplasmic segment spans residues 1 to 6 (MKRRYS). The helical transmembrane segment at 7–27 (ILIILLVAIFYRMITFRFKYL) threads the bilayer. Over 28–92 (LGYDPYFHLA…KVFGVSLTTT (65 aa)) the chain is Extracellular. The DXD motif 1 signature appears at 29-31 (GYD). Aspartate 31 is a Mn(2+) binding site. The chain crosses the membrane as a helical span at residues 93 to 113 (FKITPVIFGVLTVIFLYLSLL). Topologically, residues 114 to 120 (KLYDEKR) are cytoplasmic. A helical membrane pass occupies residues 121 to 141 (AFFGGFFLAISYGHVFRSMAN). Topologically, residues 142–145 (YYRG) are extracellular. Mn(2+) is bound by residues arginine 144 and aspartate 146. A DXD motif 2 motif is present at residues 144–146 (RGD). The helical transmembrane segment at 146-166 (DNYMLFWYSVALLGISLALGI) threads the bilayer. Topologically, residues 167-175 (KKGKWKYKR) are cytoplasmic. 2 helical membrane-spanning segments follow: residues 176-196 (LIFY…WQAY) and 197-217 (YPIF…AFIL). Topologically, residues 218–226 (KKDKYLLDS) are cytoplasmic. Residues 227–247 (IILILSTAFGVLLANYLGGIF) form a helical membrane-spanning segment. Residues 248–281 (GYGMLGYAKWLGKSVAKKLGLEFGYLKDVYLILH) are Extracellular-facing. Residues 282–302 (LKYLVPISLSFVLVLILLGFL) form a helical membrane-spanning segment. Topologically, residues 303-310 (TKDIRIRS) are cytoplasmic. A helical transmembrane segment spans residues 311–331 (LFLGIASFIGIIILFKRFEAL). At 332-352 (KELSTGFGIFKEAPILETQPT) the chain is on the extracellular side. Positions 340–343 (IFKE) match the TIXE motif motif. A helical membrane pass occupies residues 353–373 (SFKDLWAAFSLSFFLTPLFFI). At 374 to 379 (RFKKPR) the chain is on the cytoplasmic side. A helical transmembrane segment spans residues 380-400 (VEDFLTLGLIIPSVYMLKTWT). Arginine 401 is a topological domain (extracellular). Arginine 401 contacts a glycophospholipid. A helical membrane pass occupies residues 402–422 (FLFIGSMAIAIMSGIGIVELY). Residues 423-433 (EAIKPRLNGKK) lie on the Cytoplasmic side of the membrane. A helical membrane pass occupies residues 434-454 (ALATGIITLVILPGVIAGLSF). Residues 455–758 (KEVCSLHPEM…DRGVFRLSYN (304 aa)) are Extracellular-facing. An interacts with target acceptor peptide in protein substrate region spans residues 488-490 (WWD). Residues 488 to 492 (WWDWG) carry the WWDYG motif motif. Residues 540-547 (DFLKFGAI) carry the DK motif motif.

Belongs to the STT3 family. It depends on Mn(2+) as a cofactor. Mg(2+) is required as a cofactor.

It is found in the cell membrane. It catalyses the reaction an archaeal dolichyl phosphooligosaccharide + [protein]-L-asparagine = an archaeal dolichyl phosphate + a glycoprotein with the oligosaccharide chain attached by N-beta-D-glycosyl linkage to a protein L-asparagine.. It functions in the pathway protein modification; protein glycosylation. Functionally, oligosaccharyl transferase (OST) that catalyzes the initial transfer of a defined glycan (ManNAcXyl(2)GlcAMan(2)GalNAc in Pyrococcus) from the lipid carrier dolichol-monophosphate to an asparagine residue within an Asn-X-Ser/Thr consensus motif in nascent polypeptide chains, the first step in protein N-glycosylation. The sequence is that of Dolichyl-phosphooligosaccharide-protein glycotransferase 2 (aglB2) from Pyrococcus horikoshii (strain ATCC 700860 / DSM 12428 / JCM 9974 / NBRC 100139 / OT-3).